A 360-amino-acid polypeptide reads, in one-letter code: SVP1-like protein 2 (360 aa).

WD repeat units follow at residues 12 to 50 (AHEP…LRMK), 191 to 231 (AHKS…LRFE), and 236 to 275 (LDRA…PQPE).

It belongs to the WD repeat PROPPIN family.

Its subcellular location is the vacuole membrane. The protein localises to the cytoplasmic vesicle membrane. Involved in mitochondrial or peroxisomal functions and amino acid signaling pathways. The chain is SVP1-like protein 2 (HSV2) from Pichia angusta (Yeast).